The following is an 84-amino-acid chain: Dolichol phosphate-mannose biosynthesis regulatory protein (84 aa).

A run of 2 helical transmembrane segments spans residues 11-31 (FGLV…VILL) and 49-69 (YAVL…GLFI).

It belongs to the DPM2 family. In terms of assembly, component of the dolichol-phosphate mannose (DPM) synthase complex composed of DPM1, DPM2 and DPM3; in the complex interacts directly with DPM3. Component of the glycosylphosphatidylinositol-N-acetylglucosaminyltransferase (GPI-GnT) complex composed at least by PIGA, PIGC, PIGH, PIGP, PIGQ, PIGY and DPM2. Interacts with PIGA, PIGC and PIGQ.

It is found in the endoplasmic reticulum membrane. It participates in protein modification; protein glycosylation. In terms of biological role, regulates the biosynthesis of dolichol phosphate-mannose. Regulatory subunit of the dolichol-phosphate mannose (DPM) synthase complex; essential for the ER localization and stable expression of DPM1. Part of the glycosylphosphatidylinositol-N-acetylglucosaminyltransferase (GPI-GnT) complex that catalyzes the transfer of N-acetylglucosamine from UDP-N-acetylglucosamine to phosphatidylinositol and participates in the first step of GPI biosynthesis. May act by regulating the GPI-GNT complex. This is Dolichol phosphate-mannose biosynthesis regulatory protein from Cricetulus griseus (Chinese hamster).